The sequence spans 286 residues: MRVLRTVAAVRSAVEGWRASHERVALVPTMGNLHRGHLALVERAAQLADRVIVSIFVNPLQFNDRDDYSRYPRTFEKDQQYLDEYGVAVVFAPSLEDIYPQRLENVTHVEVPGLSDILEGASRLGHFRGVTTVVAVLFNIIQPQVAVFGEKDYQQLLIIRRMVADLLMPVEVESIATVRDKDGLALSSRNSYLTKEERARAPILFGALSHAAETIKEGWRNFSILEEEGRQRLVTAGFCPDYFHIRRAEDLAEPGGRENNLVVLAAAYLGKARLIDNMQVQLKSVD.

Position 30–37 (30–37 (MGNLHRGH)) interacts with ATP. The Proton donor role is filled by His-37. Gln-61 contributes to the (R)-pantoate binding site. Gln-61 serves as a coordination point for beta-alanine. An ATP-binding site is contributed by 149 to 152 (GEKD). A (R)-pantoate-binding site is contributed by Gln-155. ATP-binding positions include Val-178 and 186–189 (LSSR).

This sequence belongs to the pantothenate synthetase family. Homodimer.

Its subcellular location is the cytoplasm. The enzyme catalyses (R)-pantoate + beta-alanine + ATP = (R)-pantothenate + AMP + diphosphate + H(+). The protein operates within cofactor biosynthesis; (R)-pantothenate biosynthesis; (R)-pantothenate from (R)-pantoate and beta-alanine: step 1/1. Functionally, catalyzes the condensation of pantoate with beta-alanine in an ATP-dependent reaction via a pantoyl-adenylate intermediate. In Nitrosococcus oceani (strain ATCC 19707 / BCRC 17464 / JCM 30415 / NCIMB 11848 / C-107), this protein is Pantothenate synthetase.